The sequence spans 669 residues: Epithelial sodium channel subunit alpha (669 aa).

Positions 1–43 (MEGNKLEEQDSSPPQSTPGLMKGNKREEQGLGPEPAAPQQPTA) are disordered. The Cytoplasmic portion of the chain corresponds to 1 to 85 (MEGNKLEEQD…CSQHNRMKTA (85 aa)). Residues 33–42 (PEPAAPQQPT) are compositionally biased toward low complexity. The helical transmembrane segment at 86 to 106 (FWAVLWLCTFGMMYWQFGLLF) threads the bilayer. The Extracellular segment spans residues 107–562 (GEYFSYPVSL…SQWSLWFGSS (456 aa)). Cystine bridges form between cysteine 133–cysteine 305, cysteine 229–cysteine 236, cysteine 282–cysteine 289, cysteine 394–cysteine 479, cysteine 416–cysteine 456, cysteine 416–cysteine 475, cysteine 420–cysteine 471, cysteine 429–cysteine 456, cysteine 429–cysteine 479, and cysteine 431–cysteine 445. The tract at residues 175-243 (RSRRDLRGTL…SDCFYQTYSS (69 aa)) is gating release of inhibition by proteolysis (GRIP); protease-sensitive region that is responsible for the proteolytic activation of the channel. A helical membrane pass occupies residues 563–583 (VLSVVEMAELVFDLLVIMFLM). Over 584 to 669 (LLRRFRSRYW…SSSTCPLGGP (86 aa)) the chain is Cytoplasmic. Positions 620–669 (HPMSLSLSQPGPAPSPALTAPPPAYATLGPRPSPGGSAGASSSTCPLGGP) are disordered. Pro residues predominate over residues 630-643 (GPAPSPALTAPPPA). The PY motif; recruits WW domain-containing proteins and is thereby required for ubiquitination and inhibition of the channel by NEDD4 and NEDD4L signature appears at 640-644 (PPPAY).

The protein belongs to the amiloride-sensitive sodium channel (TC 1.A.6) family. SCNN1A subfamily. In terms of assembly, heterotrimer; containing an alpha/SCNN1A, a beta/SCNN1B and a gamma/SCNN1G subunit. Interacts with WWP1 (via WW domains). Interacts with WWP2 (via WW domains); inhibits the channel. Interacts with BPIFA1; the interaction is indirect via SCNN1B and inhibits the proteolytic processing of SCNN1A and SCNN1G and the activation of ENaC. Interacts with the full-length immature form of PCSK9 (pro-PCSK9); inhibits ENaC by promoting its proteasomal degradation. Ubiquitinated. Can be ubiquitinated at multiple sites and undergo monoubiquitination and polyubiquitination. Ubiquitination by NEDD4 or NEDD4L inhibits the ENaC channel through endocytosis, intracellular retention and degradation of its individual subunits. In terms of processing, ENaC is activated through the proteolytic maturation of its subunits. Furin cleaves the SCNN1A subunit, which results in a stepwise increase in the open probability of the channel due to the release of an inhibitory tract. BPIFA1, which is recruited by the SCNN1B subunit, prevents the proteolytic activation of ENaC. Post-translationally, N-glycosylated. Expressed in the female reproductive tract, from the fimbrial end of the fallopian tube to the endometrium (at protein level). Expressed in kidney (at protein level). In the respiratory tract, expressed in the bronchial epithelium (at protein level). Highly expressed in lung. Detected at intermediate levels in pancreas and liver, and at low levels in heart and placenta. in skin, expressed in keratinocytes, melanocytes and Merkel cells of the epidermal sub-layers, stratum basale, stratum spinosum and stratum granulosum (at protein level). Expressed in the outer root sheath of the hair follicles (at protein level). Detected in both peripheral and central cells of the sebaceous gland (at protein level). Expressed by eccrine sweat glands (at protein level). In skin, also expressed by arrector pili muscle cells and intradermal adipocytes. Isoform 1 and isoform 2 predominate in all tissues. As to expression, detected in lung and heart.

It localises to the apical cell membrane. The protein localises to the cell projection. Its subcellular location is the cilium. The protein resides in the cytoplasmic granule. It is found in the cytoplasm. It localises to the cytoplasmic vesicle. The protein localises to the secretory vesicle. Its subcellular location is the acrosome. The protein resides in the flagellum. The catalysed reaction is Na(+)(in) = Na(+)(out). Its activity is regulated as follows. Originally identified and characterized by its inhibition by the diuretic drug amiloride. Inhibited by phenamil. In terms of biological role, this is one of the three pore-forming subunits of the heterotrimeric epithelial sodium channel (ENaC), a critical regulator of sodium balance and fluid homeostasis. ENaC operates in epithelial tissues, where it mediates the electrodiffusion of sodium ions from extracellular fluid through the apical membrane of cells, with water following osmotically. It plays a key role in maintaining sodium homeostasis through electrogenic sodium reabsorption in the kidneys. Additionally, ENaC is essential for airway surface liquid homeostasis, which is crucial for proper mucus clearance. Not functional. In Homo sapiens (Human), this protein is Epithelial sodium channel subunit alpha.